A 132-amino-acid chain; its full sequence is UPF0060 membrane protein SG1469 (132 aa).

3 helical membrane passes run 5–25 (VLLY…PYCY), 32–52 (LLLI…VLYP), and 60–80 (AAYG…IDGI).

This sequence belongs to the UPF0060 family.

It is found in the cell inner membrane. The chain is UPF0060 membrane protein SG1469 from Sodalis glossinidius (strain morsitans).